We begin with the raw amino-acid sequence, 265 residues long: MQIDTKTNTNKTTAQEWKSFAFVVCIALLIRILIMEPFTVPTGSMKATILENDYIFSTKYSYGYSNYSLSFFDFIPLFKGRIFACEPERGDIVVFRPPNDMSVRYIKRLIGLPGDKIQLIDDIIYINDKKIERTEVGTYISEEGRKYLKFKETLPNGRTYFSYKLAPIFGVISDDRYGNTDVFYVPEGKYFFLGDNRDQSNDSRVNLGFVPFENFIAKAQFIWFSTKITWWDNDIGVINLILKLKPWIESVRLNRIFRNLYNTDE.

The Cytoplasmic segment spans residues 1-19 (MQIDTKTNTNKTTAQEWKS). Residues 20 to 40 (FAFVVCIALLIRILIMEPFTV) form a helical membrane-spanning segment. Residues 41-265 (PTGSMKATIL…IFRNLYNTDE (225 aa)) are Periplasmic-facing. Catalysis depends on residues Ser44 and Lys107.

This sequence belongs to the peptidase S26 family.

It is found in the cell inner membrane. The enzyme catalyses Cleavage of hydrophobic, N-terminal signal or leader sequences from secreted and periplasmic proteins.. This Rickettsia canadensis (strain McKiel) protein is Signal peptidase I (lepB).